We begin with the raw amino-acid sequence, 418 residues long: F420-non-reducing hydrogenase vhu subunit A (418 aa).

Ni(2+) is bound by residues Cys-61 and Cys-64.

This sequence belongs to the [NiFe]/[NiFeSe] hydrogenase large subunit family. As to quaternary structure, the F420-non-reducing hydrogenase vhu is composed of four subunits; VhuA, VhuD, VhuG and VhuU. Ni(2+) is required as a cofactor.

The chain is F420-non-reducing hydrogenase vhu subunit A (vhuA) from Methanocaldococcus jannaschii (strain ATCC 43067 / DSM 2661 / JAL-1 / JCM 10045 / NBRC 100440) (Methanococcus jannaschii).